The following is a 542-amino-acid chain: MATNYIFVTGGVVSSLGKGIAAASLAALLEARGLNVTIMKLDPYINVDPGTMSPTQHGEVFVTQDGAETDLDLGHYERFIRTKMTKRNNFTTGKIYSEVLRKERRGDYLGATIQVIPHITNEIKARVIDGAAGYDVAIIEVGGTVGDIESLPFLEALRQLAVQVGRERTIFMHLTLVPYIPTAGEVKTKPTQHSVKELLSIGIQPDVLICRSDRMIPANERSKIALFCNVPEKAVISLKDVESIYQIPALLQSQGLDEFVCNRFHLEGKPADLSEWEQVLYRQANPTGEVTIGMVGKYVELPDAYKSVNEALKHAGLTNRLTVHIKYIDSQDVETKGTDVLKDLDGILVPGGFGYRGVEGKILTAQYARENNIPYLGICLGMQTALIEYARNVAGMKDANSSEFVKDCAYPVIGLITEWQDAEGNVEQRSENSDLGGTMRLGAQQCHLIEGSKARELYGKETIEERHRHRYEVNNTLLPQIEAAGLKVTGLSADRKLVEIIEVPNHPWFVACQFHPEFTSTPRDGHPLFAGFVKAAKENQKK.

Positions 1–266 (MATNYIFVTG…DEFVCNRFHL (266 aa)) are amidoligase domain. S14 contributes to the CTP binding site. Position 14 (S14) interacts with UTP. Residues 15 to 20 (SLGKGI) and D72 each bind ATP. 2 residues coordinate Mg(2+): D72 and E140. CTP is bound by residues 147–149 (DIE), 187–192 (KTKPTQ), and K223. Residues 187 to 192 (KTKPTQ) and K223 contribute to the UTP site. Residue 239–241 (KDV) coordinates ATP. The region spanning 291 to 542 (TIGMVGKYVE…VKAAKENQKK (252 aa)) is the Glutamine amidotransferase type-1 domain. Residue G352 coordinates L-glutamine. C379 functions as the Nucleophile; for glutamine hydrolysis in the catalytic mechanism. Residues 380–383 (LGMQ), E403, and R470 each bind L-glutamine. Active-site residues include H515 and E517.

This sequence belongs to the CTP synthase family. In terms of assembly, homotetramer.

It catalyses the reaction UTP + L-glutamine + ATP + H2O = CTP + L-glutamate + ADP + phosphate + 2 H(+). It carries out the reaction L-glutamine + H2O = L-glutamate + NH4(+). The catalysed reaction is UTP + NH4(+) + ATP = CTP + ADP + phosphate + 2 H(+). The protein operates within pyrimidine metabolism; CTP biosynthesis via de novo pathway; CTP from UDP: step 2/2. Allosterically activated by GTP, when glutamine is the substrate; GTP has no effect on the reaction when ammonia is the substrate. The allosteric effector GTP functions by stabilizing the protein conformation that binds the tetrahedral intermediate(s) formed during glutamine hydrolysis. Inhibited by the product CTP, via allosteric rather than competitive inhibition. Its function is as follows. Catalyzes the ATP-dependent amination of UTP to CTP with either L-glutamine or ammonia as the source of nitrogen. Regulates intracellular CTP levels through interactions with the four ribonucleotide triphosphates. This Actinobacillus succinogenes (strain ATCC 55618 / DSM 22257 / CCUG 43843 / 130Z) protein is CTP synthase.